We begin with the raw amino-acid sequence, 259 residues long: Ribonuclease HII (259 aa).

Residues 70 to 258 (TLIAGIDEVG…VKSLVLGKKE (189 aa)) enclose the RNase H type-2 domain. 3 residues coordinate a divalent metal cation: Asp-76, Glu-77, and Asp-168.

Belongs to the RNase HII family. Mn(2+) serves as cofactor. Requires Mg(2+) as cofactor.

The protein localises to the cytoplasm. It catalyses the reaction Endonucleolytic cleavage to 5'-phosphomonoester.. In terms of biological role, endonuclease that specifically degrades the RNA of RNA-DNA hybrids. The polypeptide is Ribonuclease HII (Streptococcus pneumoniae (strain Taiwan19F-14)).